Consider the following 396-residue polypeptide: Phosphoglycerate kinase (396 aa).

Substrate contacts are provided by residues 22–24 (DFN), R37, 60–63 (HFGR), R118, and R151. ATP-binding positions include K201, E322, and 352–355 (GGDS).

This sequence belongs to the phosphoglycerate kinase family. Monomer.

The protein resides in the cytoplasm. The enzyme catalyses (2R)-3-phosphoglycerate + ATP = (2R)-3-phospho-glyceroyl phosphate + ADP. It functions in the pathway carbohydrate degradation; glycolysis; pyruvate from D-glyceraldehyde 3-phosphate: step 2/5. The polypeptide is Phosphoglycerate kinase (Wolbachia pipientis subsp. Culex pipiens (strain wPip)).